We begin with the raw amino-acid sequence, 430 residues long: MTSVVVVGTQWGDEGKGKITDFLSADAEVIARYQGGDNAGHTIVIDGKKFKLHLIPSGIFFPQKISVIGNGVVVNPKSLVKELAYLHDEGVTTDNLRISDRAHVILPYHIQLDQLQEDAKGDNKIGTTIKGIGPAYMDKAARVGIRIADLLDKDIFAERLRINLAEKNRLFEKMYDSTPLDFDAIFEEYYAYGQEIKQYVTDTSVILNDALDAGKRVLFEGAQGVMLDIDQGTYPFVTSSNPVAGGVTIGSGVGPSKINKVVGVCKAYTSRVGDGPFPTELFDEVGERIREVGHEYGTTTGRPRRVGWFDSVVMRHSRRVSGITNLSLNSIDVLSGLDAVKICVAYDLDGERIDYYPASLEQLKRCKPIYEELPGWQEDITGVRSLDELPENARNYVRRIGELVGVRISTFSVGPGREQTNILESVWASI.

Residues 12-18 and 40-42 contribute to the GTP site; these read GDEGKGK and GHT. The active-site Proton acceptor is D13. The Mg(2+) site is built by D13 and G40. Residues 13–16, 38–41, T128, R142, Q223, T238, and R302 contribute to the IMP site; these read DEGK and NAGH. The active-site Proton donor is the H41. A substrate-binding site is contributed by 298–304; the sequence is TTTGRPR. GTP-binding positions include R304, 330-332, and 412-414; these read SID and SVG.

It belongs to the adenylosuccinate synthetase family. In terms of assembly, homodimer. Requires Mg(2+) as cofactor.

The protein localises to the cytoplasm. The enzyme catalyses IMP + L-aspartate + GTP = N(6)-(1,2-dicarboxyethyl)-AMP + GDP + phosphate + 2 H(+). Its pathway is purine metabolism; AMP biosynthesis via de novo pathway; AMP from IMP: step 1/2. Functionally, plays an important role in the de novo pathway of purine nucleotide biosynthesis. Catalyzes the first committed step in the biosynthesis of AMP from IMP. This Streptococcus pyogenes serotype M6 (strain ATCC BAA-946 / MGAS10394) protein is Adenylosuccinate synthetase.